The following is a 119-amino-acid chain: uncharacterized protein (119 aa).

3 helical membrane-spanning segments follow: residues 28 to 48 (AWTT…HLVF), 55 to 75 (IEVV…NLAI), and 80 to 100 (PIGK…GIIV).

This sequence to M.tuberculosis Rv1342c.

The protein resides in the cell membrane. This is an uncharacterized protein from Mycobacterium leprae (strain TN).